The chain runs to 334 residues: MLNTLIVGASGYAGAELVTYVNRHPHMNITALTVSAQSNDAGKLISDLHPQLKGIVDLPLQPMSDISEFSPGVDVVFLATAHEVSHDLAPQFLEAGCVVFDLSGAFRVNDVAFYEKYYGFTHQYPELLEQAAYGLAEWCGNKLKEANLIAVPGCYPTAAQLALKPLIDADLLDLNQWPVINATSGVSGAGRKAAISNSFCEVSLQPYGVFTHRHQPEIATHLGADVIFTPHLGNFPRGILETITCRLKPGVSQVQVAQALQQAYAHKPLVRLYDKGVPALKNVVGLPFCDIGFAVQGEHLIIVATEDNLLKGAAAQAVQCANIRFGYAETQSLI.

C154 is an active-site residue.

It belongs to the NAGSA dehydrogenase family. Type 1 subfamily.

It localises to the cytoplasm. It carries out the reaction N-acetyl-L-glutamate 5-semialdehyde + phosphate + NADP(+) = N-acetyl-L-glutamyl 5-phosphate + NADPH + H(+). Its pathway is amino-acid biosynthesis; L-arginine biosynthesis; N(2)-acetyl-L-ornithine from L-glutamate: step 3/4. Catalyzes the NADPH-dependent reduction of N-acetyl-5-glutamyl phosphate to yield N-acetyl-L-glutamate 5-semialdehyde. The polypeptide is N-acetyl-gamma-glutamyl-phosphate reductase (Escherichia coli O6:H1 (strain CFT073 / ATCC 700928 / UPEC)).